We begin with the raw amino-acid sequence, 171 residues long: Adenine phosphoribosyltransferase (171 aa).

Belongs to the purine/pyrimidine phosphoribosyltransferase family. As to quaternary structure, homodimer.

Its subcellular location is the cytoplasm. It carries out the reaction AMP + diphosphate = 5-phospho-alpha-D-ribose 1-diphosphate + adenine. It participates in purine metabolism; AMP biosynthesis via salvage pathway; AMP from adenine: step 1/1. Functionally, catalyzes a salvage reaction resulting in the formation of AMP, that is energically less costly than de novo synthesis. The chain is Adenine phosphoribosyltransferase from Citrifermentans bemidjiense (strain ATCC BAA-1014 / DSM 16622 / JCM 12645 / Bem) (Geobacter bemidjiensis).